A 73-amino-acid polypeptide reads, in one-letter code: Methionyl-tRNA formyltransferase (73 aa).

The protein belongs to the Fmt family.

The enzyme catalyses L-methionyl-tRNA(fMet) + (6R)-10-formyltetrahydrofolate = N-formyl-L-methionyl-tRNA(fMet) + (6S)-5,6,7,8-tetrahydrofolate + H(+). Functionally, attaches a formyl group to the free amino group of methionyl-tRNA(fMet). The formyl group appears to play a dual role in the initiator identity of N-formylmethionyl-tRNA by promoting its recognition by IF2 and preventing the misappropriation of this tRNA by the elongation apparatus. The protein is Methionyl-tRNA formyltransferase (fmt) of Rickettsia amblyommatis (Rickettsia amblyommii).